A 477-amino-acid chain; its full sequence is Cytochrome P450 716A1 (477 aa).

A helical transmembrane segment spans residues 2–22; sequence YMAIMIILFLSSILLSLLLLL. A heme-binding site is contributed by Cys424.

It belongs to the cytochrome P450 family. Heme serves as cofactor.

It localises to the membrane. Its function is as follows. Possesses triterpene oxidizing activity. Catalyzes the C28 hydroxylation of alpha-amyrin, beta-amyrin, and lupeol, producing uvaol, erythrodiol, and betulin, respectively. Catalyzes the C28 carboxylation of alpha- and beta-amyrin. This Arabidopsis thaliana (Mouse-ear cress) protein is Cytochrome P450 716A1.